The sequence spans 132 residues: Large-conductance mechanosensitive channel (132 aa).

2 consecutive transmembrane segments (helical) span residues 11–31 and 75–95; these read FISR…GAFG and GSFL…FLLV.

This sequence belongs to the MscL family. In terms of assembly, homopentamer.

It is found in the cell inner membrane. Channel that opens in response to stretch forces in the membrane lipid bilayer. May participate in the regulation of osmotic pressure changes within the cell. The sequence is that of Large-conductance mechanosensitive channel from Synechococcus sp. (strain JA-3-3Ab) (Cyanobacteria bacterium Yellowstone A-Prime).